A 352-amino-acid chain; its full sequence is Ion-translocating oxidoreductase complex subunit D (352 aa).

The next 4 helical transmembrane spans lie at 20–40 (IMLLVLIAALPGIAAQTWFFG), 42–62 (GTLFQIVLAAITALVAEAIVL), 69–91 (VASHLQDYSALLTGLLLAVSIPP), and 123–143 (PAMIGYVVLLISFPVQMTSWL). Residue T187 is modified to FMN phosphoryl threonine. Helical transmembrane passes span 215–235 (LAGVGWQWVNLAWLVGGVFLL), 242–262 (WHIPVSFLLTLALCAALGWLF), 267–287 (LASPQLHLLSGATMLGAFFIL), 301–321 (LIFGALAGVLVWLIRSFGGYP), and 322–342 (DGVAFAVLLANITVPLIDYYT).

The protein belongs to the NqrB/RnfD family. The complex is composed of six subunits: RsxA, RsxB, RsxC, RsxD, RsxE and RsxG. FMN is required as a cofactor.

Its subcellular location is the cell inner membrane. Its function is as follows. Part of a membrane-bound complex that couples electron transfer with translocation of ions across the membrane. Required to maintain the reduced state of SoxR. The polypeptide is Ion-translocating oxidoreductase complex subunit D (Salmonella choleraesuis (strain SC-B67)).